We begin with the raw amino-acid sequence, 334 residues long: Beta-hexosaminidase (334 aa).

Substrate contacts are provided by residues aspartate 60, arginine 68, arginine 133, and 163-164 (KH). Residue histidine 176 is the Proton donor/acceptor of the active site. Aspartate 247 serves as the catalytic Nucleophile.

It belongs to the glycosyl hydrolase 3 family. NagZ subfamily.

It localises to the cytoplasm. It carries out the reaction Hydrolysis of terminal non-reducing N-acetyl-D-hexosamine residues in N-acetyl-beta-D-hexosaminides.. The protein operates within cell wall biogenesis; peptidoglycan recycling. Functionally, plays a role in peptidoglycan recycling by cleaving the terminal beta-1,4-linked N-acetylglucosamine (GlcNAc) from peptide-linked peptidoglycan fragments, giving rise to free GlcNAc, anhydro-N-acetylmuramic acid and anhydro-N-acetylmuramic acid-linked peptides. The sequence is that of Beta-hexosaminidase from Xanthomonas oryzae pv. oryzae (strain MAFF 311018).